A 706-amino-acid chain; its full sequence is Ribosomal RNA large subunit methyltransferase K/L (706 aa).

The THUMP domain occupies 43 to 154 (LLYQSLLWSR…RDMASVALDL (112 aa)).

The protein belongs to the methyltransferase superfamily. RlmKL family.

It is found in the cytoplasm. It carries out the reaction guanosine(2445) in 23S rRNA + S-adenosyl-L-methionine = N(2)-methylguanosine(2445) in 23S rRNA + S-adenosyl-L-homocysteine + H(+). The enzyme catalyses guanosine(2069) in 23S rRNA + S-adenosyl-L-methionine = N(2)-methylguanosine(2069) in 23S rRNA + S-adenosyl-L-homocysteine + H(+). In terms of biological role, specifically methylates the guanine in position 2445 (m2G2445) and the guanine in position 2069 (m7G2069) of 23S rRNA. The sequence is that of Ribosomal RNA large subunit methyltransferase K/L from Serratia proteamaculans (strain 568).